The sequence spans 412 residues: uncharacterized protein (412 aa).

Zn(2+) is bound at residue H49. E52 acts as the Proton acceptor in catalysis. Residues H53 and E129 each contribute to the Zn(2+) site.

Belongs to the peptidase M16 family. The cofactor is Zn(2+).

This is an uncharacterized protein from Rickettsia bellii (strain RML369-C).